Here is a 319-residue protein sequence, read N- to C-terminus: Peroxidase 13 (319 aa).

Residues 1–22 form the signal peptide; it reads MITIALFLVLLYFHDQLGYSAA. 4 disulfides stabilise this stretch: C33/C111, C66/C71, C117/C315, and C196/C222. H64 serves as the catalytic Proton acceptor. Ca(2+)-binding residues include D65, V68, G70, D72, and S74. P158 provides a ligand contact to substrate. H189 contacts heme b. T190 is a Ca(2+) binding site. D235, S238, and D243 together coordinate Ca(2+). The N-linked (GlcNAc...) asparagine glycan is linked to N280.

The protein belongs to the peroxidase family. Classical plant (class III) peroxidase subfamily. The cofactor is heme b. Ca(2+) is required as a cofactor.

The protein resides in the secreted. The enzyme catalyses 2 a phenolic donor + H2O2 = 2 a phenolic radical donor + 2 H2O. Removal of H(2)O(2), oxidation of toxic reductants, biosynthesis and degradation of lignin, suberization, auxin catabolism, response to environmental stresses such as wounding, pathogen attack and oxidative stress. These functions might be dependent on each isozyme/isoform in each plant tissue. This is Peroxidase 13 (PER13) from Arabidopsis thaliana (Mouse-ear cress).